Consider the following 245-residue polypeptide: tRNA1(Val) (adenine(37)-N6)-methyltransferase (245 aa).

This sequence belongs to the methyltransferase superfamily. tRNA (adenine-N(6)-)-methyltransferase family.

The protein resides in the cytoplasm. It carries out the reaction adenosine(37) in tRNA1(Val) + S-adenosyl-L-methionine = N(6)-methyladenosine(37) in tRNA1(Val) + S-adenosyl-L-homocysteine + H(+). Functionally, specifically methylates the adenine in position 37 of tRNA(1)(Val) (anticodon cmo5UAC). In Escherichia coli O157:H7 (strain EC4115 / EHEC), this protein is tRNA1(Val) (adenine(37)-N6)-methyltransferase.